We begin with the raw amino-acid sequence, 246 residues long: Tyrosine recombinase XerD-like (246 aa).

One can recognise a Core-binding (CB) domain in the interval 1–72 (MINDINNFIE…AVNQFLFFLY (72 aa)). A Tyr recombinase domain is found at 84–246 (QETEKITLTQ…TPITLERYYR (163 aa)). Active-site residues include Lys-149 and Arg-212. Tyr-244 (O-(3'-phospho-DNA)-tyrosine intermediate) is an active-site residue.

The protein belongs to the 'phage' integrase family. XerD-like subfamily.

The protein resides in the cytoplasm. Putative tyrosine recombinase. Not involved in the cutting and rejoining of the recombining DNA molecules on dif(SL) site. The protein is Tyrosine recombinase XerD-like of Streptococcus agalactiae serotype III (strain NEM316).